The following is a 525-amino-acid chain: GMP synthase [glutamine-hydrolyzing] (525 aa).

The Glutamine amidotransferase type-1 domain occupies 9-207; sequence RILILDFGSQ…VKEICHCEAL (199 aa). Catalysis depends on C86, which acts as the Nucleophile. Catalysis depends on residues H181 and E183. Residues 208–400 enclose the GMPS ATP-PPase domain; the sequence is WTPATIIEDA…LGLPYNMLYR (193 aa). Residue 235–241 participates in ATP binding; that stretch reads SGGVDSS.

In terms of assembly, homodimer.

It catalyses the reaction XMP + L-glutamine + ATP + H2O = GMP + L-glutamate + AMP + diphosphate + 2 H(+). Its pathway is purine metabolism; GMP biosynthesis; GMP from XMP (L-Gln route): step 1/1. Catalyzes the synthesis of GMP from XMP. The polypeptide is GMP synthase [glutamine-hydrolyzing] (Tolumonas auensis (strain DSM 9187 / NBRC 110442 / TA 4)).